Consider the following 299-residue polypeptide: Bifunctional protein FolD (299 aa).

Residues 168–170 (GRS), Ser-193, and Ile-234 contribute to the NADP(+) site.

It belongs to the tetrahydrofolate dehydrogenase/cyclohydrolase family. In terms of assembly, homodimer.

The enzyme catalyses (6R)-5,10-methylene-5,6,7,8-tetrahydrofolate + NADP(+) = (6R)-5,10-methenyltetrahydrofolate + NADPH. The catalysed reaction is (6R)-5,10-methenyltetrahydrofolate + H2O = (6R)-10-formyltetrahydrofolate + H(+). It functions in the pathway one-carbon metabolism; tetrahydrofolate interconversion. Functionally, catalyzes the oxidation of 5,10-methylenetetrahydrofolate to 5,10-methenyltetrahydrofolate and then the hydrolysis of 5,10-methenyltetrahydrofolate to 10-formyltetrahydrofolate. This chain is Bifunctional protein FolD, found in Brucella anthropi (strain ATCC 49188 / DSM 6882 / CCUG 24695 / JCM 21032 / LMG 3331 / NBRC 15819 / NCTC 12168 / Alc 37) (Ochrobactrum anthropi).